Consider the following 490-residue polypeptide: Pre-glycoprotein polyprotein GP complex (490 aa).

Glycine 2 is lipidated: N-myristoyl glycine; by host. The Extracellular portion of the chain corresponds to 2 to 17 (GQIVTFFQEVPHVIEE). Residues 18 to 33 (VMNIVLIALSILAILK) form a helical membrane-spanning segment. Residues 34–58 (GLYNVATCGLIGLVTFLLLSGRSCS) lie on the Cytoplasmic side of the membrane. Position 57 (cysteine 57) interacts with Zn(2+). Residues 59–431 (LIYKGTYELQ…QGKTPLGLVD (373 aa)) lie on the Extracellular side of the membrane. N-linked (GlcNAc...) asparagine; by host glycosylation is found at asparagine 78, asparagine 88, asparagine 98, asparagine 108, asparagine 118, and asparagine 166. 6 cysteine pairs are disulfide-bonded: cysteine 85–cysteine 230, cysteine 117–cysteine 154, cysteine 179–cysteine 211, cysteine 278–cysteine 291, cysteine 300–cysteine 309, and cysteine 363–cysteine 384. N-linked (GlcNAc...) asparagine; by host glycosylation occurs at asparagine 223. 4 N-linked (GlcNAc...) asparagine; by host glycosylation sites follow: asparagine 364, asparagine 372, asparagine 389, and asparagine 394. A helical membrane pass occupies residues 432–452 (LFVFSTSFYLISIFLHLVKIP). Over 453-490 (THRHIVGKPCPKPHRLNHMGICSCGLYKQPGVPVRWKR) the chain is Cytoplasmic. 6 residues coordinate Zn(2+): histidine 454, histidine 456, cysteine 462, histidine 466, cysteine 474, and cysteine 476.

This sequence belongs to the arenaviridae GPC protein family. Interacts with glycoprotein G2. Part of the GP complex (GP-C) together with glycoprotein G1 and glycoprotein G2. The GP-complex interacts with protein Z, which interacts with ribonucleocapsid; these interactions may induce virion budding. As to quaternary structure, homotrimer; disulfide-linked. In pre-fusion state, G1 homotrimers bind G2 homotrimers via ionic interactions. Part of the GP complex (GP-C) together with glycoprotein G2 and the stable signal peptide. Interacts with the primary host receptor DAG1 on the cell surface; this interaction occurs at pH 8.0 but not at pH 6.0 and below. Upon virus internalization and at endosomal pH, interacts with the host lysosomal protein LAMP1; this interaction mediates G1 dissociation from GP-C and membrane fusion. The GP-complex interacts with protein Z, which interacts with ribonucleocapsid; these interactions may induce virion budding. In terms of assembly, homotrimer. Interacts with the stable signal peptide. In pre-fusion state, G2 homotrimers bind G1 homotrimers via ionic interactions. Part of the GP complex (GP-C) together with glycoprotein G1 and the stable signal peptide. Acidification in the endosome triggers rearrangements, which ultimately leads to a 6 helix bundle formed by the two heptad repeat domains (HR1 and HR2) in post-fusion state. The GP-complex interacts with protein Z, which interacts with ribonucleocapsid; these interactions may induce virion budding. Post-translationally, specific enzymatic cleavages in vivo yield mature proteins. GP-C polyprotein is cleaved in the endoplasmic reticulum by the host protease MBTPS1. Only cleaved glycoprotein is incorporated into virions. The SSP remains stably associated with the GP complex following cleavage by signal peptidase and plays crucial roles in the trafficking of GP through the secretory pathway. In terms of processing, myristoylation is necessary for GP2-mediated fusion activity.

The protein localises to the virion membrane. The protein resides in the host endoplasmic reticulum membrane. It is found in the host Golgi apparatus membrane. It localises to the host cell membrane. Functionally, functions as a cleaved signal peptide that is retained as the third component of the GP complex (GP-C). Helps to stabilize the spike complex in its native conformation. The SSP is required for efficient glycoprotein expression, post-translational maturation cleavage of G1 and G2, glycoprotein transport to the cell surface plasma membrane, formation of infectious virus particles, and acid pH-dependent glycoprotein-mediated cell fusion. Forms the virion spikes together with glycoprotein G2. The glycoprotein spike trimers are connected to the underlying matrix. Interacts with the host receptor. Mediates virus attachment to the host primary receptor alpha-dystroglycan DAG1 (alpha-DG) at the cell surface. This attachment induces virion internalization apparently through macropinocytosis. Following endocytosis, there is a pH-dependent switch from binding DAG1 to the host lysosomal receptor LAMP1. This latter binding triggers the dissociation of GP1, exposing the fusion subunit, GP2, such that fusion can occur. Down-modulates host DAG1. Its function is as follows. Forms the virion spikes together with glycoprotein G1. The glycoprotein spike trimers are connected to the underlying matrix. Class I viral fusion protein that directs fusion of viral and host endosomal membranes, leading to delivery of the nucleocapsid into the cytoplasm. Membrane fusion is mediated by irreversible conformational changes induced by acidification. This Lassa virus (strain GA391) (LASV) protein is Pre-glycoprotein polyprotein GP complex.